A 610-amino-acid polypeptide reads, in one-letter code: Elongation factor 4 (610 aa).

One can recognise a tr-type G domain in the interval 13–195; the sequence is SHIRNFSIVA…AIVHKLPAPK (183 aa). GTP-binding positions include 25 to 30 and 142 to 145; these read DHGKST and NKID.

It belongs to the TRAFAC class translation factor GTPase superfamily. Classic translation factor GTPase family. LepA subfamily.

The protein resides in the cell inner membrane. It catalyses the reaction GTP + H2O = GDP + phosphate + H(+). Functionally, required for accurate and efficient protein synthesis under certain stress conditions. May act as a fidelity factor of the translation reaction, by catalyzing a one-codon backward translocation of tRNAs on improperly translocated ribosomes. Back-translocation proceeds from a post-translocation (POST) complex to a pre-translocation (PRE) complex, thus giving elongation factor G a second chance to translocate the tRNAs correctly. Binds to ribosomes in a GTP-dependent manner. The sequence is that of Elongation factor 4 from Rhizobium johnstonii (strain DSM 114642 / LMG 32736 / 3841) (Rhizobium leguminosarum bv. viciae).